The sequence spans 278 residues: Glycyl-dTMP PLP-dependent decarboxylase (278 aa).

The protein belongs to the pyridoxal-phosphate-dependent aminodecarboxylase family.

The catalysed reaction is 5-C(alpha)-glycyl-dTMP in DNA + H(+) = 5-aminoethyl-dUMP in DNA + CO2. In terms of biological role, converts 5-Calpha-glycinylthymidine (Calpha-GlyT) into 5-aminoethyl-2'-deoxyuridine (5-NedU) as a step in the pathway leading to thymidine hypermodifications in the viral genome. As a final result of the pathway of hypermodification, 5-aminoethyl-2'-deoxyuridine (5-NedU) substitutes for about 30% of thymidines in the viral DNA. These modifications probably prevent degradation of viral genome by the host restriction-modification antiviral defense system. The protein is Glycyl-dTMP PLP-dependent decarboxylase of Pseudomonas aeruginosa.